The sequence spans 238 residues: Proenkephalin-A (238 aa).

The N-terminal stretch at 1 to 25 (MAASALSTCLWMLVLGTCVSLVVGT) is a signal peptide. Cystine bridges form between Cys27-Cys50, Cys31-Cys54, and Cys34-Cys66. Residues 76–103 (QSPLASQQDQERVDAMMADEEDATSPEH) are disordered. 3 consecutive propeptides follow at residues 124–167 (SSAS…AEAV), 177–195 (ADRG…GRVL), and 206–230 (VGRP…SELQ).

This sequence belongs to the opioid neuropeptide precursor family. Expressed by the venom gland. Moderately expressed in the venom gland transcriptome.

The protein localises to the secreted. Its function is as follows. Met-enkephalins compete with and mimic the effects of opiate drugs. They play a role in a number of physiologic functions, including pain perception and responses to stress. Enkephalin peptides found in Meiacanthus fangblennies induce physiological effects via their interaction with delta-type opioid receptors (OPRD1) (tested on M.grammistes). Therefore, finding a proenkephalin sequence in M.atrodorsalis venom suggests that this protein act in the same manner. The sequence is that of Proenkephalin-A from Meiacanthus atrodorsalis (Forktail blenny).